The following is a 1072-amino-acid chain: DNA-directed RNA polymerase subunit beta (1072 aa).

It belongs to the RNA polymerase beta chain family. In terms of assembly, in plastids the minimal PEP RNA polymerase catalytic core is composed of four subunits: alpha, beta, beta', and beta''. When a (nuclear-encoded) sigma factor is associated with the core the holoenzyme is formed, which can initiate transcription.

It localises to the plastid. The protein resides in the chloroplast. The catalysed reaction is RNA(n) + a ribonucleoside 5'-triphosphate = RNA(n+1) + diphosphate. In terms of biological role, DNA-dependent RNA polymerase catalyzes the transcription of DNA into RNA using the four ribonucleoside triphosphates as substrates. The protein is DNA-directed RNA polymerase subunit beta of Crucihimalaya wallichii (Rock-cress).